Consider the following 117-residue polypeptide: Large ribosomal subunit protein bL19 (117 aa).

This sequence belongs to the bacterial ribosomal protein bL19 family.

This protein is located at the 30S-50S ribosomal subunit interface and may play a role in the structure and function of the aminoacyl-tRNA binding site. The protein is Large ribosomal subunit protein bL19 of Aliivibrio fischeri (strain ATCC 700601 / ES114) (Vibrio fischeri).